A 282-amino-acid polypeptide reads, in one-letter code: Glucuronoxylan 4-O-methyltransferase 1 (282 aa).

Residues 13 to 33 form a helical membrane-spanning segment; that stretch reads VLLVFLLATLILIFIVRSTLT.

This sequence belongs to the methyltransferase superfamily. Expressed in rosette leaves, stems, flowers and siliques.

Its subcellular location is the golgi apparatus membrane. It catalyses the reaction glucuronoxylan D-glucuronate + n S-adenosyl-L-methionine = glucuronoxylan 4-O-methyl-D-glucuronate + n S-adenosyl-L-homocysteine + n H(+). In terms of biological role, methyltransferase catalyzing 4-O-methylation of glucuronic acid side chains on xylan. This is Glucuronoxylan 4-O-methyltransferase 1 (GXM1) from Arabidopsis thaliana (Mouse-ear cress).